The following is a 338-amino-acid chain: Oligopeptide transport ATP-binding protein OppD (338 aa).

An ABC transporter domain is found at 7–257 (LEAKQVSVAF…PKHPYTRSLL (251 aa)). 43–50 (GESGSGKS) is an ATP binding site.

Belongs to the ABC transporter superfamily. In terms of assembly, the complex is composed of two ATP-binding proteins (OppD and OppF), two transmembrane proteins (OppB and OppC) and a solute-binding protein (OppA).

The protein resides in the cell membrane. It catalyses the reaction a [peptide](out) + ATP + H2O = a [peptide](in) + ADP + phosphate + H(+). Functionally, part of the ABC transporter complex OppABCDF involved in the uptake of oligopeptides. Probably responsible for energy coupling to the transport system. Essential for uptake of peptides larger than three amino acids and for growth in milk. The polypeptide is Oligopeptide transport ATP-binding protein OppD (Lactococcus lactis subsp. cremoris (strain SK11)).